The chain runs to 531 residues: CCA tRNA nucleotidyltransferase, mitochondrial (531 aa).

The protein belongs to the tRNA nucleotidyltransferase/poly(A) polymerase family.

The protein localises to the mitochondrion. Its subcellular location is the cytoplasm. It localises to the nucleus. The enzyme catalyses a tRNA precursor + 2 CTP + ATP = a tRNA with a 3' CCA end + 3 diphosphate. Its function is as follows. Nucleotidyltransferase that catalyzes the addition and repair of the essential 3'-terminal CCA sequence in tRNAs, which is necessary for the attachment of amino acids to the 3' terminus of tRNA molecules, using CTP and ATP as substrates. tRNA 3'-terminal CCA addition is required both for tRNA processing and repair. Also involved in tRNA surveillance by mediating tandem CCA addition to generate a CCACCA at the 3' terminus of unstable tRNAs. While stable tRNAs receive only 3'-terminal CCA, unstable tRNAs are marked with CCACCA and rapidly degraded. The structural flexibility of RNA controls the choice between CCA versus CCACCA addition: following the first CCA addition cycle, nucleotide-binding to the active site triggers a clockwise screw motion, producing torque on the RNA. This ejects stable RNAs, whereas unstable RNAs are refolded while bound to the enzyme and subjected to a second CCA catalytic cycle. The sequence is that of CCA tRNA nucleotidyltransferase, mitochondrial (CCA1) from Candida glabrata (strain ATCC 2001 / BCRC 20586 / JCM 3761 / NBRC 0622 / NRRL Y-65 / CBS 138) (Yeast).